Here is a 588-residue protein sequence, read N- to C-terminus: Probable metalloprotease ARX1 (588 aa).

It belongs to the peptidase M24 family. Component of the nucleoplasmic and cytoplasmic pre-60S ribosomal particles.

The protein localises to the cytoplasm. It is found in the nucleus. In terms of biological role, probable metalloprotease involved in proper assembly of pre-ribosomal particles during the biogenesis of the 60S ribosomal subunit. Accompanies the pre-60S particles to the cytoplasm. This Candida glabrata (strain ATCC 2001 / BCRC 20586 / JCM 3761 / NBRC 0622 / NRRL Y-65 / CBS 138) (Yeast) protein is Probable metalloprotease ARX1 (ARX1).